Reading from the N-terminus, the 157-residue chain is Crossover junction endodeoxyribonuclease RuvC (157 aa).

Catalysis depends on residues Asp7, Glu66, and Asp139. Mg(2+)-binding residues include Asp7, Glu66, and Asp139.

It belongs to the RuvC family. In terms of assembly, homodimer which binds Holliday junction (HJ) DNA. The HJ becomes 2-fold symmetrical on binding to RuvC with unstacked arms; it has a different conformation from HJ DNA in complex with RuvA. In the full resolvosome a probable DNA-RuvA(4)-RuvB(12)-RuvC(2) complex forms which resolves the HJ. Requires Mg(2+) as cofactor.

Its subcellular location is the cytoplasm. It catalyses the reaction Endonucleolytic cleavage at a junction such as a reciprocal single-stranded crossover between two homologous DNA duplexes (Holliday junction).. Its function is as follows. The RuvA-RuvB-RuvC complex processes Holliday junction (HJ) DNA during genetic recombination and DNA repair. Endonuclease that resolves HJ intermediates. Cleaves cruciform DNA by making single-stranded nicks across the HJ at symmetrical positions within the homologous arms, yielding a 5'-phosphate and a 3'-hydroxyl group; requires a central core of homology in the junction. The consensus cleavage sequence is 5'-(A/T)TT(C/G)-3'. Cleavage occurs on the 3'-side of the TT dinucleotide at the point of strand exchange. HJ branch migration catalyzed by RuvA-RuvB allows RuvC to scan DNA until it finds its consensus sequence, where it cleaves and resolves the cruciform DNA. The chain is Crossover junction endodeoxyribonuclease RuvC from Helicobacter pylori (strain ATCC 700392 / 26695) (Campylobacter pylori).